The following is a 193-amino-acid chain: MTLSPLKKLAILLGATIFLQGCVAAVIGGGAVAAKVATDPRTTGTQIDDETLEFKVENAVEKDAQIKAEGRVNAVSYNGRVLLIGQVPNSDVKDTATALAKGVEGVNEVYNELTVSPKISFAQISKDSWLTTQVKSKMFVDGRVKATDVKVISENGEVFLLGNVTQSQANAAADIASKISGVKKVIKVFKYLD.

The N-terminal stretch at 1-21 (MTLSPLKKLAILLGATIFLQG) is a signal peptide. Cysteine 22 carries N-palmitoyl cysteine lipidation. Cysteine 22 is lipidated: S-diacylglycerol cysteine. BON domains lie at 48–117 (DDET…TVSP) and 126–193 (KDSW…KYLD).

It belongs to the lipoprotein DolP family.

The protein localises to the cell outer membrane. In terms of biological role, plays an important role in maintaining outer membrane integrity. This chain is Outer membrane lipoprotein DolP, found in Haemophilus influenzae (strain ATCC 51907 / DSM 11121 / KW20 / Rd).